A 351-amino-acid chain; its full sequence is MRVDDFDFELPPELIARRPLAERSSSRLLCLDAETGEINHRGFKDLLGMVNPGDLLVFNDTRVIPARLFGQKRSGGKVEVMVERVVSMTEMLAHVRASKAPKPGVEILIEENYVLTMVEREGDLFRLRVSQGGSVSELLERCGHMPLPPYIDREDDLSDRERYQTVYSRQPGAVAAPTAGLHFDEALLLAMSQKGVETAFVTLHVGAGTFQPVRVDVVQDHQMHSEYLEVSADVCERVRQVKAAGGRVVAVGTTAVRALETASRSGSIEPYAGDTSIFIYPGYEFVTVDALVTNFHLPKSTLLMLVSAFAGREHILAAYQEAIEQRYRFFSYGDAMFLHRRQSGLEDAGAN.

The protein belongs to the QueA family. As to quaternary structure, monomer.

The protein localises to the cytoplasm. The catalysed reaction is 7-aminomethyl-7-carbaguanosine(34) in tRNA + S-adenosyl-L-methionine = epoxyqueuosine(34) in tRNA + adenine + L-methionine + 2 H(+). The protein operates within tRNA modification; tRNA-queuosine biosynthesis. In terms of biological role, transfers and isomerizes the ribose moiety from AdoMet to the 7-aminomethyl group of 7-deazaguanine (preQ1-tRNA) to give epoxyqueuosine (oQ-tRNA). This Hahella chejuensis (strain KCTC 2396) protein is S-adenosylmethionine:tRNA ribosyltransferase-isomerase.